The sequence spans 430 residues: Glutamate-1-semialdehyde 2,1-aminomutase (430 aa).

N6-(pyridoxal phosphate)lysine is present on Lys268.

Belongs to the class-III pyridoxal-phosphate-dependent aminotransferase family. HemL subfamily. In terms of assembly, homodimer. Requires pyridoxal 5'-phosphate as cofactor.

It localises to the cytoplasm. The catalysed reaction is (S)-4-amino-5-oxopentanoate = 5-aminolevulinate. The protein operates within porphyrin-containing compound metabolism; protoporphyrin-IX biosynthesis; 5-aminolevulinate from L-glutamyl-tRNA(Glu): step 2/2. In Bacillus subtilis (strain 168), this protein is Glutamate-1-semialdehyde 2,1-aminomutase (hemL).